A 198-amino-acid chain; its full sequence is Penicillin-binding protein activator LpoB (198 aa).

Positions 1-20 (MSWIRIRRSGVLLLALVLSG) are cleaved as a signal peptide. Cysteine 21 carries N-palmitoyl cysteine lipidation. Cysteine 21 carries the S-diacylglycerol cysteine lipid modification. A disordered region spans residues 28–62 (PQPAAPVEPVTPPVNVPQPPKAEPGQNVPPPPKMQ). Residues 30–61 (PAAPVEPVTPPVNVPQPPKAEPGQNVPPPPKM) show a composition bias toward pro residues.

Belongs to the LpoB family. As to quaternary structure, interacts with PBP1b.

It is found in the cell outer membrane. Regulator of peptidoglycan synthesis that is essential for the function of penicillin-binding protein 1B (PBP1b). The sequence is that of Penicillin-binding protein activator LpoB from Erwinia amylovora (strain CFBP1430).